The chain runs to 266 residues: Pre-mRNA-splicing factor PRP11 (266 aa).

Positions 1–21 (MNYLEGVGSKKGGGGIASESQ) are disordered. Residues 66-96 (LVCKLCNTMHMSWSSVERHLGGKKHGLNVLR) form a Matrin-type zinc finger.

Belongs to the SF3A2 family. As to quaternary structure, belongs to the CWC complex (or CEF1-associated complex), a spliceosome sub-complex reminiscent of a late-stage spliceosome composed of the U2, U5 and U6 snRNAs and at least BUD13, BUD31, BRR2, CDC40, CEF1, CLF1, CUS1, CWC2, CWC15, CWC21, CWC22, CWC23, CWC24, CWC25, CWC27, ECM2, HSH155, IST3, ISY1, LEA1, MSL1, NTC20, PRP8, PRP9, PRP11, PRP19, PRP21, PRP22, PRP45, PRP46, SLU7, SMB1, SMD1, SMD2, SMD3, SMX2, SMX3, SNT309, SNU114, SPP2, SYF1, SYF2, RSE1 and YJU2. Interacts with CUS2.

The protein resides in the nucleus. MRNA splicing factors, PRP9, PRP11, and PRP21, are necessary for addition of the U2 snRNP to the pre-mRNA in an early step of spliceosome assembly. The chain is Pre-mRNA-splicing factor PRP11 (PRP11) from Saccharomyces cerevisiae (strain ATCC 204508 / S288c) (Baker's yeast).